We begin with the raw amino-acid sequence, 207 residues long: Small ribosomal subunit protein uS4 (207 aa).

Residues 31-55 (KCKLDSKPGQHGRTSGARTSDYGTQ) form a disordered region. The span at 42–53 (GRTSGARTSDYG) shows a compositional bias: polar residues. The region spanning 97–160 (SRLDNVVYRM…KKQARIIEAL (64 aa)) is the S4 RNA-binding domain.

The protein belongs to the universal ribosomal protein uS4 family. As to quaternary structure, part of the 30S ribosomal subunit. Contacts protein S5. The interaction surface between S4 and S5 is involved in control of translational fidelity.

Its function is as follows. One of the primary rRNA binding proteins, it binds directly to 16S rRNA where it nucleates assembly of the body of the 30S subunit. In terms of biological role, with S5 and S12 plays an important role in translational accuracy. This chain is Small ribosomal subunit protein uS4, found in Burkholderia multivorans (strain ATCC 17616 / 249).